The chain runs to 937 residues: Protein translocase subunit SecA (937 aa).

Residues Gln90, 108-112, and Asp509 contribute to the ATP site; that span reads GEGKT.

This sequence belongs to the SecA family. As to quaternary structure, monomer and homodimer. Part of the essential Sec protein translocation apparatus which comprises SecA, SecYEG and auxiliary proteins SecDF. Other proteins may also be involved.

Its subcellular location is the cell inner membrane. The protein localises to the cellular thylakoid membrane. It is found in the cytoplasm. The catalysed reaction is ATP + H2O + cellular proteinSide 1 = ADP + phosphate + cellular proteinSide 2.. Functionally, part of the Sec protein translocase complex. Interacts with the SecYEG preprotein conducting channel. Has a central role in coupling the hydrolysis of ATP to the transfer of proteins into and across the cell membrane, serving as an ATP-driven molecular motor driving the stepwise translocation of polypeptide chains across the membrane. Probably participates in protein translocation into and across both the cytoplasmic and thylakoid membranes in cyanobacterial cells. This Synechococcus sp. (strain CC9902) protein is Protein translocase subunit SecA.